The following is a 153-amino-acid chain: Regulatory protein RecX (153 aa).

The protein belongs to the RecX family.

The protein resides in the cytoplasm. Its function is as follows. Modulates RecA activity. The sequence is that of Regulatory protein RecX from Pseudomonas aeruginosa (strain UCBPP-PA14).